The sequence spans 277 residues: Alpha carbonic anhydrase 5 (277 aa).

The signal sequence occupies residues 1–22; that stretch reads MKIPSIGYVFFLIFISITIVSS. Residues 33–269 enclose the Alpha-carbonic anhydrase domain; the sequence is TQFNYEKKGE…KNERPVALYI (237 aa). A disulfide bond links C58 and C219. N-linked (GlcNAc...) asparagine glycosylation occurs at N91. H99 acts as the Proton acceptor in catalysis. The N-linked (GlcNAc...) asparagine glycan is linked to N117. Residues H127, H129, and H146 each contribute to the Zn(2+) site. A substrate-binding site is contributed by 215 to 216; it reads TT.

It belongs to the alpha-class carbonic anhydrase family. Zn(2+) serves as cofactor. In terms of processing, N-glycosylated.

The protein resides in the plastid. It localises to the chloroplast stroma. It catalyses the reaction hydrogencarbonate + H(+) = CO2 + H2O. Its function is as follows. Reversible hydration of carbon dioxide. This Arabidopsis thaliana (Mouse-ear cress) protein is Alpha carbonic anhydrase 5 (ACA5).